Here is a 300-residue protein sequence, read N- to C-terminus: UPF0282 protein TGAM_0379 (300 aa).

It belongs to the UPF0282 family.

The polypeptide is UPF0282 protein TGAM_0379 (Thermococcus gammatolerans (strain DSM 15229 / JCM 11827 / EJ3)).